Consider the following 308-residue polypeptide: Acyltransferase drtE (308 aa).

In terms of domain architecture, AB hydrolase-1 spans 35 to 159; the sequence is PALVMNPGYN…AAEAKDNFSR (125 aa).

It belongs to the polyketide transferase af380 family.

It participates in secondary metabolite biosynthesis; terpenoid biosynthesis. Functionally, acyltransferase; part of the gene cluster that mediates the biosynthesis of various drimane-type sesquiterpene esters, compounds that exhibit diverse biological activities and are widely present in eukaryotes. The pathway begins with the synthesis of the backbone drimenol by the terpene cyclase drtB using farnesyl pyrophosphate (FPP) as substrate. The cytochrome P450 monooxygenase drtD is then responsible for the hydroxylations at C-6, C-9 and C-12, as well as the oxidation of hydroxyl groups at C-6 and C-11 to a ketone and an aldehyde, respectively. Then, the biosynthesis can go in two directions, either the hydroxylated drimenol is further hydroxylated at C-2 and C-3 by an enzyme(s) not associated with the drt cluster, or the FAD-binding oxidoreductase drtC further oxidizes C-11 or C-12 to form the butyrolactone ring. DrtB, drtD and drtC are solely responsible for the formation of the different drimane structures observed during drimane sesquiterpenes biosynthesis. The polyketide synthase drtA synthesizes different lengths (C6 and C8) of PKS chains, which are then oxidized to varying degrees by the short-chain dehydrogenase drtF. Finally, these PKS chains are transferred onto drimane sesquiterpenes by the acyltransferase drtE, forming the sesquiterpene esters. In addition to the different fatty acyl-CoA chains produced by drtA, drtE is also able to use cinnamoyl-CoA as a substrate. The sequence is that of Acyltransferase drtE from Aspergillus calidoustus.